Reading from the N-terminus, the 230-residue chain is Cysteine S-methyltransferase OspZ (230 aa).

Residues 49–52 (GITR) are interaction with host proteins TAB2, TAB3 and ZRANB3. Ala-92, Ser-98, Arg-107, Gln-111, Tyr-204, and Glu-208 together coordinate S-adenosyl-L-methionine.

It belongs to the NleE/OspZ family. Monomer.

Its subcellular location is the secreted. The protein resides in the host cytoplasm. It localises to the host nucleus. The catalysed reaction is L-cysteinyl-[protein] + S-adenosyl-L-methionine = S-methyl-L-cysteinyl-[protein] + S-adenosyl-L-homocysteine + H(+). Its function is as follows. Cysteine methyltransferase effector that inhibits host cell NF-kappa-B activation by preventing nuclear translocation of host protein RELA/p65. Acts by mediating cysteine methylation of host proteins TAB2 and TAB3: methylation of a conserved cysteine residue of the RanBP2-type zinc finger (NZF) of TAB2 and TAB3 disrupts zinc-binding, thereby inactivating the ubiquitin chain-binding activity of TAB2 and TAB3, leading to NF-kappa-B inactivation. Also mediates cysteine methylation of host protein ZRANB3, inactivating its ability to bind ubiquitin chains. The polypeptide is Cysteine S-methyltransferase OspZ (Shigella boydii).